A 209-amino-acid polypeptide reads, in one-letter code: Kynurenine formamidase (209 aa).

Residue Trp20 participates in substrate binding. Zn(2+) is bound by residues His50, His54, and Asp56. His60 acts as the Proton donor/acceptor in catalysis. Positions 161 and 173 each coordinate Zn(2+).

This sequence belongs to the Cyclase 1 superfamily. KynB family. In terms of assembly, homodimer. It depends on Zn(2+) as a cofactor.

It catalyses the reaction N-formyl-L-kynurenine + H2O = L-kynurenine + formate + H(+). The protein operates within amino-acid degradation; L-tryptophan degradation via kynurenine pathway; L-kynurenine from L-tryptophan: step 2/2. Catalyzes the hydrolysis of N-formyl-L-kynurenine to L-kynurenine, the second step in the kynurenine pathway of tryptophan degradation. The sequence is that of Kynurenine formamidase from Bacillus cereus (strain ATCC 10987 / NRS 248).